The chain runs to 261 residues: Cytochrome c oxidase subunit 3 (261 aa).

Over 1-15 the chain is Mitochondrial matrix; that stretch reads MTHQTHAYHMVNPSP. Residues 16–34 traverse the membrane as a helical segment; it reads WPLTGALSALLMTSGLAMW. The Mitochondrial intermembrane segment spans residues 35-40; it reads FHFNSP. Residues 41 to 66 form a helical membrane-spanning segment; the sequence is SLLLIGLVTNTLTMYQWWRDIVREGT. The Mitochondrial matrix portion of the chain corresponds to 67-72; that stretch reads FQGHHT. A helical membrane pass occupies residues 73–105; the sequence is PIVQKGLRYGMILFIISEVFFFAGFFWAFYHSS. Residues 106 to 128 are Mitochondrial intermembrane-facing; that stretch reads LAPTPELGGCWPPTGINPLNPLE. The chain crosses the membrane as a helical span at residues 129-152; it reads VPLLNTSVLLASGVSITWAHHSLM. At 153-155 the chain is on the mitochondrial matrix side; that stretch reads EGN. The chain crosses the membrane as a helical span at residues 156 to 183; it reads RKNMQQALAITILLGIYFTLLQASEYYE. At 184 to 190 the chain is on the mitochondrial intermembrane side; that stretch reads TSFTISD. A helical transmembrane segment spans residues 191–223; it reads GVYGSTFFMATGFHGLHVIIGSTFLTVCLLRQF. The Mitochondrial matrix portion of the chain corresponds to 224–232; sequence NFHFTSNHH. A helical membrane pass occupies residues 233-256; sequence FGFEAAAWYWHFVDVVWLFLYVSI. Residues 257–261 lie on the Mitochondrial intermembrane side of the membrane; it reads YWWGS.

The protein belongs to the cytochrome c oxidase subunit 3 family. As to quaternary structure, component of the cytochrome c oxidase (complex IV, CIV), a multisubunit enzyme composed of 14 subunits. The complex is composed of a catalytic core of 3 subunits MT-CO1, MT-CO2 and MT-CO3, encoded in the mitochondrial DNA, and 11 supernumerary subunits COX4I, COX5A, COX5B, COX6A, COX6B, COX6C, COX7A, COX7B, COX7C, COX8 and NDUFA4, which are encoded in the nuclear genome. The complex exists as a monomer or a dimer and forms supercomplexes (SCs) in the inner mitochondrial membrane with NADH-ubiquinone oxidoreductase (complex I, CI) and ubiquinol-cytochrome c oxidoreductase (cytochrome b-c1 complex, complex III, CIII), resulting in different assemblies (supercomplex SCI(1)III(2)IV(1) and megacomplex MCI(2)III(2)IV(2)).

Its subcellular location is the mitochondrion inner membrane. The enzyme catalyses 4 Fe(II)-[cytochrome c] + O2 + 8 H(+)(in) = 4 Fe(III)-[cytochrome c] + 2 H2O + 4 H(+)(out). Functionally, component of the cytochrome c oxidase, the last enzyme in the mitochondrial electron transport chain which drives oxidative phosphorylation. The respiratory chain contains 3 multisubunit complexes succinate dehydrogenase (complex II, CII), ubiquinol-cytochrome c oxidoreductase (cytochrome b-c1 complex, complex III, CIII) and cytochrome c oxidase (complex IV, CIV), that cooperate to transfer electrons derived from NADH and succinate to molecular oxygen, creating an electrochemical gradient over the inner membrane that drives transmembrane transport and the ATP synthase. Cytochrome c oxidase is the component of the respiratory chain that catalyzes the reduction of oxygen to water. Electrons originating from reduced cytochrome c in the intermembrane space (IMS) are transferred via the dinuclear copper A center (CU(A)) of subunit 2 and heme A of subunit 1 to the active site in subunit 1, a binuclear center (BNC) formed by heme A3 and copper B (CU(B)). The BNC reduces molecular oxygen to 2 water molecules using 4 electrons from cytochrome c in the IMS and 4 protons from the mitochondrial matrix. The protein is Cytochrome c oxidase subunit 3 (MT-CO3) of Oryctolagus cuniculus (Rabbit).